Reading from the N-terminus, the 402-residue chain is Eukaryotic initiation factor 4A (402 aa).

Positions 29 to 57 (ESFDDMELKEELLRGIYGFGFEKPSAIQK) match the Q motif motif. Residues 60-230 (IVPCTTGKDV…NRFMRNPIRI (171 aa)) form the Helicase ATP-binding domain. ATP is bound at residue 73-80 (AQSGTGKT). The short motif at 178 to 181 (DEAD) is the DEAD box element. The region spanning 241 to 402 (GIRQFYINVQ…EMPESIADLI (162 aa)) is the Helicase C-terminal domain.

It belongs to the DEAD box helicase family. eIF4A subfamily. In terms of assembly, eIF4F is a multi-subunit complex, the composition of which varies with external and internal environmental conditions. It is composed of at least EIF4A, EIF4E and EIF4G.

It catalyses the reaction ATP + H2O = ADP + phosphate + H(+). In terms of biological role, ATP-dependent RNA helicase which is a subunit of the eIF4F complex involved in cap recognition and is required for mRNA binding to ribosome. In the current model of translation initiation, eIF4A unwinds RNA secondary structures in the 5'-UTR of mRNAs which is necessary to allow efficient binding of the small ribosomal subunit, and subsequent scanning for the initiator codon. The chain is Eukaryotic initiation factor 4A (inf-1) from Caenorhabditis elegans.